Here is a 258-residue protein sequence, read N- to C-terminus: Acyl-[acyl-carrier-protein]--UDP-N-acetylglucosamine O-acyltransferase (258 aa).

It belongs to the transferase hexapeptide repeat family. LpxA subfamily. Homotrimer.

It is found in the cytoplasm. It carries out the reaction a (3R)-hydroxyacyl-[ACP] + UDP-N-acetyl-alpha-D-glucosamine = a UDP-3-O-[(3R)-3-hydroxyacyl]-N-acetyl-alpha-D-glucosamine + holo-[ACP]. It participates in glycolipid biosynthesis; lipid IV(A) biosynthesis; lipid IV(A) from (3R)-3-hydroxytetradecanoyl-[acyl-carrier-protein] and UDP-N-acetyl-alpha-D-glucosamine: step 1/6. Functionally, involved in the biosynthesis of lipid A, a phosphorylated glycolipid that anchors the lipopolysaccharide to the outer membrane of the cell. The chain is Acyl-[acyl-carrier-protein]--UDP-N-acetylglucosamine O-acyltransferase from Stutzerimonas stutzeri (strain A1501) (Pseudomonas stutzeri).